The following is a 67-amino-acid chain: Large ribosomal subunit protein bL35 (67 aa).

Residues 1 to 16 (MPKMKTKSSAKKRFRV) show a composition bias toward basic residues. The disordered stretch occupies residues 1–24 (MPKMKTKSSAKKRFRVRPGGTVKR).

Belongs to the bacterial ribosomal protein bL35 family.

This Paracidovorax citrulli (strain AAC00-1) (Acidovorax citrulli) protein is Large ribosomal subunit protein bL35.